We begin with the raw amino-acid sequence, 66 residues long: Large ribosomal subunit protein bL33c (66 aa).

The protein belongs to the bacterial ribosomal protein bL33 family.

It is found in the plastid. Its subcellular location is the chloroplast. In Ceratophyllum demersum (Rigid hornwort), this protein is Large ribosomal subunit protein bL33c.